Reading from the N-terminus, the 24-residue chain is Brevinin-1BYb (24 aa).

The cysteines at positions 18 and 24 are disulfide-linked.

In terms of tissue distribution, expressed by the skin glands.

The protein localises to the secreted. Functionally, antibacterial activity against Gram-positive bacterium S.aureus and Gram-negative bacterium E.coli. Has moderate antifungal activity against C.albicans and strong hemolytic activity. The sequence is that of Brevinin-1BYb from Rana boylii (Foothill yellow-legged frog).